A 95-amino-acid polypeptide reads, in one-letter code: Basic phospholipase A2 (95 aa).

Residues lysine 7 and lysine 10 are each lipidated (N6-palmitoyl lysine). 3 residues coordinate Ca(2+): tyrosine 23, glycine 25, and glycine 27. 5 disulfides stabilise this stretch: cysteine 24-cysteine 40, cysteine 39-cysteine 77, cysteine 46-cysteine 70, cysteine 53-cysteine 63, and cysteine 57-cysteine 68. Histidine 43 is a catalytic residue. Aspartate 44 lines the Ca(2+) pocket. Residue aspartate 71 is part of the active site.

Monomer. The cofactor is Ca(2+). Expressed by the venom gland.

Its subcellular location is the secreted. The catalysed reaction is a 1,2-diacyl-sn-glycero-3-phosphocholine + H2O = a 1-acyl-sn-glycero-3-phosphocholine + a fatty acid + H(+). Its function is as follows. PLA2 catalyzes the calcium-dependent hydrolysis of the 2-acyl groups in 3-sn-phosphoglycerides. Induces local and systemic myotoxicity in an intramuscular mouse model. Induces local edema in a mouse footpad assay. Does not exhibit any anticoagulant effects. Does not mediate an antibacterial effect against Gram-negative and Gram-positive bacteria. The sequence is that of Basic phospholipase A2 from Agkistrodon piscivorus leucostoma (Western cottonmouth).